A 312-amino-acid polypeptide reads, in one-letter code: DNA-directed RNA polymerase subunit alpha (312 aa).

The alpha N-terminal domain (alpha-NTD) stretch occupies residues 1 to 226 (MIEFEKPKIT…DHLNLFVDLS (226 aa)). Positions 243-312 (TERVLDKIIE…ELGLSLKKRK (70 aa)) are alpha C-terminal domain (alpha-CTD).

This sequence belongs to the RNA polymerase alpha chain family. In terms of assembly, homodimer. The RNAP catalytic core consists of 2 alpha, 1 beta, 1 beta' and 1 omega subunit. When a sigma factor is associated with the core the holoenzyme is formed, which can initiate transcription.

It catalyses the reaction RNA(n) + a ribonucleoside 5'-triphosphate = RNA(n+1) + diphosphate. DNA-dependent RNA polymerase catalyzes the transcription of DNA into RNA using the four ribonucleoside triphosphates as substrates. The protein is DNA-directed RNA polymerase subunit alpha of Lactococcus lactis subsp. lactis (strain IL1403) (Streptococcus lactis).